The following is a 337-amino-acid chain: Glycerol-3-phosphate dehydrogenase [NAD(P)+] (337 aa).

S17, Y18, H38, and K112 together coordinate NADPH. Sn-glycerol 3-phosphate-binding residues include K112, G141, and T143. Residue A145 participates in NADPH binding. Residues K197, D250, S260, R261, and N262 each coordinate sn-glycerol 3-phosphate. Residue K197 is the Proton acceptor of the active site. NADPH is bound at residue R261. NADPH contacts are provided by V285 and E287.

This sequence belongs to the NAD-dependent glycerol-3-phosphate dehydrogenase family.

It is found in the cytoplasm. It catalyses the reaction sn-glycerol 3-phosphate + NAD(+) = dihydroxyacetone phosphate + NADH + H(+). The catalysed reaction is sn-glycerol 3-phosphate + NADP(+) = dihydroxyacetone phosphate + NADPH + H(+). Its pathway is membrane lipid metabolism; glycerophospholipid metabolism. In terms of biological role, catalyzes the reduction of the glycolytic intermediate dihydroxyacetone phosphate (DHAP) to sn-glycerol 3-phosphate (G3P), the key precursor for phospholipid synthesis. The sequence is that of Glycerol-3-phosphate dehydrogenase [NAD(P)+] from Pasteurella multocida (strain Pm70).